We begin with the raw amino-acid sequence, 73 residues long: Venom protein 55.1 (73 aa).

A signal peptide spans 1–19; that stretch reads MNFLCILFVVSLISSLSKC. At Pro57 the chain carries Proline amide. A propeptide spanning residues 61–73 is cleaved from the precursor; the sequence is RRSFDLYALVNAK.

Belongs to the diuretic hormone class 2 family. Expressed by the venom gland.

The protein localises to the secreted. Functionally, regulates fluid secretion. This is Venom protein 55.1 from Lychas mucronatus (Chinese swimming scorpion).